The sequence spans 277 residues: Large ribosomal subunit protein uL2 (277 aa).

2 disordered regions span residues 37-59 (KNST…GGHK) and 221-265 (RGTA…KRTD). A compositionally biased stretch (basic residues) spans 50–59 (TTRHRGGGHK). Residues 229 to 241 (DHPHGGGEGRTGE) show a composition bias toward basic and acidic residues.

Belongs to the universal ribosomal protein uL2 family. In terms of assembly, part of the 50S ribosomal subunit. Forms a bridge to the 30S subunit in the 70S ribosome.

Functionally, one of the primary rRNA binding proteins. Required for association of the 30S and 50S subunits to form the 70S ribosome, for tRNA binding and peptide bond formation. It has been suggested to have peptidyltransferase activity; this is somewhat controversial. Makes several contacts with the 16S rRNA in the 70S ribosome. This Chromobacterium violaceum (strain ATCC 12472 / DSM 30191 / JCM 1249 / CCUG 213 / NBRC 12614 / NCIMB 9131 / NCTC 9757 / MK) protein is Large ribosomal subunit protein uL2.